The following is a 159-amino-acid chain: tRNA-specific adenosine deaminase (159 aa).

Residues 6–133 (EEQTYFMQEA…ERLNHRVQVE (128 aa)) enclose the CMP/dCMP-type deaminase domain. His-57 serves as a coordination point for Zn(2+). Glu-59 functions as the Proton donor in the catalytic mechanism. 2 residues coordinate Zn(2+): Cys-87 and Cys-90.

The protein belongs to the cytidine and deoxycytidylate deaminase family. In terms of assembly, homodimer. Zn(2+) is required as a cofactor.

It carries out the reaction adenosine(34) in tRNA + H2O + H(+) = inosine(34) in tRNA + NH4(+). Functionally, catalyzes the deamination of adenosine to inosine at the wobble position 34 of tRNA(Arg2). This Streptococcus pyogenes serotype M18 (strain MGAS8232) protein is tRNA-specific adenosine deaminase.